The chain runs to 421 residues: Serine hydroxymethyltransferase (421 aa).

Residues leucine 121 and 125 to 127 each bind (6S)-5,6,7,8-tetrahydrofolate; that span reads GHL. Lysine 229 carries the N6-(pyridoxal phosphate)lysine modification.

Belongs to the SHMT family. As to quaternary structure, homodimer. The cofactor is pyridoxal 5'-phosphate.

The protein localises to the cytoplasm. The enzyme catalyses (6R)-5,10-methylene-5,6,7,8-tetrahydrofolate + glycine + H2O = (6S)-5,6,7,8-tetrahydrofolate + L-serine. It functions in the pathway one-carbon metabolism; tetrahydrofolate interconversion. Its pathway is amino-acid biosynthesis; glycine biosynthesis; glycine from L-serine: step 1/1. Functionally, catalyzes the reversible interconversion of serine and glycine with tetrahydrofolate (THF) serving as the one-carbon carrier. This reaction serves as the major source of one-carbon groups required for the biosynthesis of purines, thymidylate, methionine, and other important biomolecules. Also exhibits THF-independent aldolase activity toward beta-hydroxyamino acids, producing glycine and aldehydes, via a retro-aldol mechanism. This chain is Serine hydroxymethyltransferase, found in Actinobacillus pleuropneumoniae serotype 7 (strain AP76).